A 195-amino-acid polypeptide reads, in one-letter code: Imidazoleglycerol-phosphate dehydratase (195 aa).

This sequence belongs to the imidazoleglycerol-phosphate dehydratase family.

Its subcellular location is the cytoplasm. It carries out the reaction D-erythro-1-(imidazol-4-yl)glycerol 3-phosphate = 3-(imidazol-4-yl)-2-oxopropyl phosphate + H2O. It functions in the pathway amino-acid biosynthesis; L-histidine biosynthesis; L-histidine from 5-phospho-alpha-D-ribose 1-diphosphate: step 6/9. The polypeptide is Imidazoleglycerol-phosphate dehydratase (Azoarcus sp. (strain BH72)).